Here is a 183-residue protein sequence, read N- to C-terminus: Caspase recruitment domain-containing protein 19 (183 aa).

Cysteine 7 and cysteine 77 are disulfide-bonded. A CARD domain is found at 8-99 (DRLVQDTPFL…PLHSHLPSRY (92 aa)). The helical transmembrane segment at 122-142 (GPMSFLAGLGLAAGLALLLYC) threads the bilayer.

In terms of assembly, associates with BCL10 by CARD-CARD interaction.

The protein resides in the endoplasmic reticulum membrane. The protein localises to the mitochondrion membrane. In terms of biological role, plays a role in inhibiting the effects of BCL10-induced activation of NF-kappa-B. The chain is Caspase recruitment domain-containing protein 19 from Mus musculus (Mouse).